Here is a 469-residue protein sequence, read N- to C-terminus: Ribulose bisphosphate carboxylase large chain (469 aa).

K5 bears the N6,N6,N6-trimethyllysine mark. Residues N114 and T164 each coordinate substrate. Residue K166 is the Proton acceptor of the active site. K168 contributes to the substrate binding site. Mg(2+)-binding residues include K192, D194, and E195. Position 192 is an N6-carboxylysine (K192). H285 acts as the Proton acceptor in catalysis. 3 residues coordinate substrate: R286, H318, and S370.

It belongs to the RuBisCO large chain family. Type I subfamily. Heterohexadecamer of 8 large chains and 8 small chains; disulfide-linked. The disulfide link is formed within the large subunit homodimers. Mg(2+) is required as a cofactor. Post-translationally, the disulfide bond which can form in the large chain dimeric partners within the hexadecamer appears to be associated with oxidative stress and protein turnover.

It is found in the plastid. It localises to the chloroplast. The catalysed reaction is 2 (2R)-3-phosphoglycerate + 2 H(+) = D-ribulose 1,5-bisphosphate + CO2 + H2O. The enzyme catalyses D-ribulose 1,5-bisphosphate + O2 = 2-phosphoglycolate + (2R)-3-phosphoglycerate + 2 H(+). In terms of biological role, ruBisCO catalyzes two reactions: the carboxylation of D-ribulose 1,5-bisphosphate, the primary event in carbon dioxide fixation, as well as the oxidative fragmentation of the pentose substrate in the photorespiration process. Both reactions occur simultaneously and in competition at the same active site. The polypeptide is Ribulose bisphosphate carboxylase large chain (Antirhea lucida (Palo iloron)).